The following is a 736-amino-acid chain: uncharacterized protein (736 aa).

ABC transporter domains are found at residues 183-459 and 518-734; these read IKID…KQME and LQMS…TMTI. Residues 215–222 and 551–558 contribute to the ATP site; these read GRNGIGKS and GPNGAGKS.

It belongs to the ABC transporter superfamily.

The protein localises to the cytoplasm. This is an uncharacterized protein from Schizosaccharomyces pombe (strain 972 / ATCC 24843) (Fission yeast).